Reading from the N-terminus, the 1112-residue chain is Glutamate receptor-interacting protein 1 (1112 aa).

At serine 43 the chain carries Phosphoserine. PDZ domains are found at residues 53-136 (VVEL…EYEL), 150-238 (TVEV…EYDV), 252-336 (LVEV…LPHH), 471-560 (EVVL…EFDV), 572-657 (HVKL…RKDE), and 672-754 (TVEL…KKQT). 3 disordered regions span residues 752-796 (KQTD…VYPS), 841-886 (KRAS…AEQE), and 922-963 (NHEA…DVGR). Over residues 869-880 (STASGFAGASDS) the composition is skewed to low complexity. Polar residues predominate over residues 928 to 958 (ARSQLGRQASFQERSNSRPHYSQTTRSNTLP). Positions 988-1070 (KVTLYKDSGM…KLDLVISRNP (83 aa)) constitute a PDZ 7 domain. The tract at residues 1077–1112 (IEQPALPSDWSEQNSAFFQQPSHGGNLETREPTNTL) is disordered. Residues 1086-1099 (WSEQNSAFFQQPSH) are compositionally biased toward polar residues.

In terms of assembly, interacts with EFNB1, EPHA7, EPHB2, EFNB3, KIF5A, KIF5C, KIF5B and the C-terminal tail of PRLHR. Forms a ternary complex with GRIA2 and CSPG4. Can form homomultimers or heteromultimers with GRIP2. Interacts with GRIA2, GRIA3, GRIPAP1/GRASP1, PPFIA1, PPFIA4, FRAS1, PLCD4, PTPRF and liprins-alpha. Interacts with ATAD1 in an ATP-dependent manner. ATAD1-catalyzed ATP hydrolysis disrupts binding to ATAD1 and to GRIA2 and leads to AMPAR complex disassembly. Interacts with SLC30A9. Interacts with BUD23. Forms a complex with NSG1, GRIA2 and STX12; controls the intracellular fate of AMPAR and the endosomal sorting of the GRIA2 subunit toward recycling and membrane targeting. Interacts with NSG1. As to expression, expressed in brain, testis and retina. In brain highly expressed in the olfactory bulb, cortex and hippocampus and lower level in thalamus, cerebellum and spinal cord. In brain it is found in the perikaryon, dendrites, dendritic shafts, dendritic spines and, excitatory and inhibitory synapses of neurons. In retina, it is most abundant in the plexiform layers than in perikarya.

It is found in the cytoplasmic vesicle. The protein resides in the perikaryon. The protein localises to the cell projection. It localises to the dendrite. Its subcellular location is the cytoplasm. It is found in the endomembrane system. The protein resides in the postsynaptic cell membrane. The protein localises to the postsynaptic density. It localises to the endoplasmic reticulum membrane. In terms of biological role, may play a role as a localized scaffold for the assembly of a multiprotein signaling complex and as mediator of the trafficking of its binding partners at specific subcellular location in neurons. Through complex formation with NSG1, GRIA2 and STX12 controls the intracellular fate of AMPAR and the endosomal sorting of the GRIA2 subunit toward recycling and membrane targeting. The protein is Glutamate receptor-interacting protein 1 (Grip1) of Rattus norvegicus (Rat).